Reading from the N-terminus, the 133-residue chain is Small ribosomal subunit protein uS11 (133 aa).

Residues 1-23 (MPPKTRGAVRKPRKKDKKNIALG) are disordered. The segment covering 7 to 17 (GAVRKPRKKDK) has biased composition (basic residues).

Belongs to the universal ribosomal protein uS11 family. Part of the 30S ribosomal subunit. Interacts with proteins S7 and S18. Binds to IF-3.

In terms of biological role, located on the platform of the 30S subunit, it bridges several disparate RNA helices of the 16S rRNA. Forms part of the Shine-Dalgarno cleft in the 70S ribosome. This chain is Small ribosomal subunit protein uS11, found in Pseudarthrobacter chlorophenolicus (strain ATCC 700700 / DSM 12829 / CIP 107037 / JCM 12360 / KCTC 9906 / NCIMB 13794 / A6) (Arthrobacter chlorophenolicus).